Consider the following 531-residue polypeptide: Ceramide kinase (531 aa).

The interval 1–115 is essential for enzyme activity; that stretch reads MGAMGAAEPL…SADEQLCHLW (115 aa). The interval 1–125 is required for binding to sulfatide and phosphoinositides; it reads MGAMGAAEPL…LQTLRGLLES (125 aa). The DAGKc domain occupies 128–278; it reads SRPKHLLVFI…IDVSSVHYHN (151 aa). ATP-binding positions include 138–140 and 170–174; these read NPF and TEHAN. 195-198 provides a ligand contact to substrate; that stretch reads GGDG. Catalysis depends on aspartate 197, which acts as the Proton donor/acceptor. ATP is bound by residues glutamate 202, 239–241, arginine 304, and arginine 310; that span reads GST. Phosphoserine occurs at positions 340 and 408. 502 to 504 is an ATP binding site; the sequence is DGE.

Requires Ca(2+) as cofactor. The cofactor is Mg(2+). High level expression in heart, brain, testis and pancreas; low expression in spleen, liver and lung; not detected in skeletal muscle.

The protein localises to the cytoplasm. It is found in the cell membrane. The catalysed reaction is an N-acylsphing-4-enine + ATP = an N-acylsphing-4-enine 1-phosphate + ADP + H(+). It catalyses the reaction N-(hexanoyl)sphing-4-enine + ATP = N-hexanoylsphing-4-enine 1-phosphate + ADP + H(+). It carries out the reaction N-(acetyl)-sphing-4-enine + ATP = N-(acetyl)-sphing-4-enine-1-phosphate + ADP + H(+). The enzyme catalyses N-hexadecanoylsphing-4-enine + ATP = N-(hexadecanoyl)-sphing-4-enine-1-phosphate + ADP + H(+). The catalysed reaction is N-hexanoyl-(4R)-hydroxysphinganine + ATP = N-hexanoyl-(4R)-hydroxysphinganine-1-phosphate + ADP + H(+). Catalyzes specifically the phosphorylation of ceramide to form ceramide 1-phosphate. Acts efficiently on natural and analog ceramides (C6, C8, C16 ceramides, and C8-dihydroceramide), to a lesser extent on C2-ceramide and C6-dihydroceramide, but not on other lipids, such as various sphingosines. Shows a greater preference for D-erythro isomer of ceramides. Binds phosphoinositides. This chain is Ceramide kinase (Cerk), found in Mus musculus (Mouse).